A 254-amino-acid chain; its full sequence is Zinc import ATP-binding protein ZnuC (254 aa).

Positions 5–219 (VELKEVCLSF…PEFARLFGRP (215 aa)) constitute an ABC transporter domain. 37–44 (GPNGAGKS) contacts ATP. A compositionally biased stretch (basic and acidic residues) spans 233-242 (CDGEHHHHEP). The disordered stretch occupies residues 233 to 254 (CDGEHHHHEPQVPVIRLPSRNQ).

The protein belongs to the ABC transporter superfamily. Zinc importer (TC 3.A.1.15.5) family. As to quaternary structure, the complex is composed of two ATP-binding proteins (ZnuC), two transmembrane proteins (ZnuB) and a solute-binding protein (ZnuA).

It is found in the cell inner membrane. The enzyme catalyses Zn(2+)(out) + ATP(in) + H2O(in) = Zn(2+)(in) + ADP(in) + phosphate(in) + H(+)(in). In terms of biological role, part of the ABC transporter complex ZnuABC involved in zinc import. Responsible for energy coupling to the transport system. In Aeromonas hydrophila subsp. hydrophila (strain ATCC 7966 / DSM 30187 / BCRC 13018 / CCUG 14551 / JCM 1027 / KCTC 2358 / NCIMB 9240 / NCTC 8049), this protein is Zinc import ATP-binding protein ZnuC.